We begin with the raw amino-acid sequence, 716 residues long: Protein Hook homolog 2 (716 aa).

Residues 1 to 161 (MSVDKAELCG…ELMTKDTPDS (161 aa)) form a required for localization to the centrosome and induction of aggresome formation region. Residues 1 to 546 (MSVDKAELCG…LKRKLEDHLQ (546 aa)) form a sufficient for interaction with microtubules region. The Calponin-homology (CH) domain occupies 6–122 (AELCGSLLTW…KLLQLVLGCA (117 aa)). At Ser163 the chain carries Phosphoserine. 2 coiled-coil regions span residues 188-427 (DHLQ…AQLQ) and 455-605 (AELR…VDKA). The tract at residues 533–716 (DPTLLKRKLE…ALSLRPTDKH (184 aa)) is required for localization to the centrosome and induction of aggresome formation. The segment at 582 to 716 (DSLQKKDADL…ALSLRPTDKH (135 aa)) is sufficient for interaction with CNTRL.

Belongs to the hook family. In terms of assembly, self-associates. Component of the FTS/Hook/FHIP complex (FHF complex), composed of AKTIP/FTS, FHIP1B, and one or more members of the Hook family of proteins HOOK1, HOOK2, and HOOK3. May interact directly with AKTIP/FTS, HOOK1 and HOOK3. Associates with several subunits of the homotypic vesicular sorting complex (the HOPS complex) including VPS16 and VPS41; these interactions may be indirect. Interacts with CNTRL. Interacts with microtubules. Interacts with ZC3H14. Interacts with LRGUK (via guanylate kinase-like domain). Interacts with CCDC181. Interacts with AP4M1; the interaction is direct, mediates the interaction between FTS-Hook-FHIP (FHF) complex and AP-4 and the perinuclear distribution of AP-4. Expressed in brain, cerebellum, kidney, liver and heart, with highest levels in heart and kidney (at protein level).

The protein resides in the cytoplasm. The protein localises to the cytoskeleton. Its subcellular location is the microtubule organizing center. It localises to the centrosome. It is found in the golgi apparatus. The protein resides in the trans-Golgi network. Functionally, component of the FTS/Hook/FHIP complex (FHF complex). The FHF complex may function to promote vesicle trafficking and/or fusion via the homotypic vesicular protein sorting complex (the HOPS complex). Contributes to the establishment and maintenance of centrosome function. May function in the positioning or formation of aggresomes, which are pericentriolar accumulations of misfolded proteins, proteasomes and chaperones. FHF complex promotes the distribution of AP-4 complex to the perinuclear area of the cell. The sequence is that of Protein Hook homolog 2 (Hook2) from Mus musculus (Mouse).